A 366-amino-acid polypeptide reads, in one-letter code: Chorismate synthase (366 aa).

Residues Arg-48 and Arg-54 each contribute to the NADP(+) site. Residues 129–131 (RSS), 241–242 (NA), Gly-290, 305–309 (KPTSS), and Arg-331 each bind FMN.

Belongs to the chorismate synthase family. Homotetramer. FMNH2 is required as a cofactor.

It catalyses the reaction 5-O-(1-carboxyvinyl)-3-phosphoshikimate = chorismate + phosphate. Its pathway is metabolic intermediate biosynthesis; chorismate biosynthesis; chorismate from D-erythrose 4-phosphate and phosphoenolpyruvate: step 7/7. Functionally, catalyzes the anti-1,4-elimination of the C-3 phosphate and the C-6 proR hydrogen from 5-enolpyruvylshikimate-3-phosphate (EPSP) to yield chorismate, which is the branch point compound that serves as the starting substrate for the three terminal pathways of aromatic amino acid biosynthesis. This reaction introduces a second double bond into the aromatic ring system. In Nitrobacter hamburgensis (strain DSM 10229 / NCIMB 13809 / X14), this protein is Chorismate synthase.